Reading from the N-terminus, the 149-residue chain is Calmodulin (149 aa).

A2 carries the post-translational modification N-acetylalanine. EF-hand domains follow at residues 8–43 (DQIS…LGQN), 44–79 (PTEA…KMKD), 81–116 (DSEE…LGEK), and 117–149 (LTDE…MMAK). Positions 21, 23, 25, 27, 32, 57, 59, 61, 63, 68, 94, 96, 98, and 105 each coordinate Ca(2+). K116 is subject to N6,N6,N6-trimethyllysine. The Ca(2+) site is built by D130, D132, D134, Q136, and E141.

Belongs to the calmodulin family.

Functionally, calmodulin mediates the control of a large number of enzymes, ion channels and other proteins by Ca(2+). Among the enzymes to be stimulated by the calmodulin-Ca(2+) complex are a number of protein kinases and phosphatases. This is Calmodulin (CAM) from Malus domestica (Apple).